The chain runs to 227 residues: Cytochrome c oxidase subunit 2 (227 aa).

At 1–14 (MAHPVQLGFQDAAS) the chain is on the mitochondrial intermembrane side. The chain crosses the membrane as a helical span at residues 15 to 45 (PIMEELLYFHDHTLMIMFLISSLVLYIISLM). Residues 46–59 (LTTKLTHTSTMDAQ) are Mitochondrial matrix-facing. Residues 60–87 (EVETVWTILPAAILILIALPSLRILYMM) form a helical membrane-spanning segment. The Mitochondrial intermembrane segment spans residues 88 to 227 (DEITSPSLTL…HFEEWLLFTL (140 aa)). Positions 161, 196, 198, 200, 204, and 207 each coordinate Cu cation. Glu198 contributes to the Mg(2+) binding site.

It belongs to the cytochrome c oxidase subunit 2 family. As to quaternary structure, component of the cytochrome c oxidase (complex IV, CIV), a multisubunit enzyme composed of 14 subunits. The complex is composed of a catalytic core of 3 subunits MT-CO1, MT-CO2 and MT-CO3, encoded in the mitochondrial DNA, and 11 supernumerary subunits COX4I, COX5A, COX5B, COX6A, COX6B, COX6C, COX7A, COX7B, COX7C, COX8 and NDUFA4, which are encoded in the nuclear genome. The complex exists as a monomer or a dimer and forms supercomplexes (SCs) in the inner mitochondrial membrane with NADH-ubiquinone oxidoreductase (complex I, CI) and ubiquinol-cytochrome c oxidoreductase (cytochrome b-c1 complex, complex III, CIII), resulting in different assemblies (supercomplex SCI(1)III(2)IV(1) and megacomplex MCI(2)III(2)IV(2)). Found in a complex with TMEM177, COA6, COX18, COX20, SCO1 and SCO2. Interacts with TMEM177 in a COX20-dependent manner. Interacts with COX20. Interacts with COX16. The cofactor is Cu cation.

It localises to the mitochondrion inner membrane. The catalysed reaction is 4 Fe(II)-[cytochrome c] + O2 + 8 H(+)(in) = 4 Fe(III)-[cytochrome c] + 2 H2O + 4 H(+)(out). In terms of biological role, component of the cytochrome c oxidase, the last enzyme in the mitochondrial electron transport chain which drives oxidative phosphorylation. The respiratory chain contains 3 multisubunit complexes succinate dehydrogenase (complex II, CII), ubiquinol-cytochrome c oxidoreductase (cytochrome b-c1 complex, complex III, CIII) and cytochrome c oxidase (complex IV, CIV), that cooperate to transfer electrons derived from NADH and succinate to molecular oxygen, creating an electrochemical gradient over the inner membrane that drives transmembrane transport and the ATP synthase. Cytochrome c oxidase is the component of the respiratory chain that catalyzes the reduction of oxygen to water. Electrons originating from reduced cytochrome c in the intermembrane space (IMS) are transferred via the dinuclear copper A center (CU(A)) of subunit 2 and heme A of subunit 1 to the active site in subunit 1, a binuclear center (BNC) formed by heme A3 and copper B (CU(B)). The BNC reduces molecular oxygen to 2 water molecules using 4 electrons from cytochrome c in the IMS and 4 protons from the mitochondrial matrix. This Varecia variegata (Black-and-white ruffed lemur) protein is Cytochrome c oxidase subunit 2 (MT-CO2).